The following is a 107-amino-acid chain: Cytochrome c2 (107 aa).

Heme c is bound by residues Cys14, Cys17, His18, and Met80.

The protein belongs to the cytochrome c family. Post-translationally, binds 1 heme c group covalently per subunit.

Functionally, cytochrome c2 is found mainly in purple, non-sulfur, photosynthetic bacteria where it functions as the electron donor to the oxidized bacteriochlorophyll in the photophosphorylation pathway. However, it may also have a role in the respiratory chain and is found in some non-photosynthetic bacteria. This Rhodoblastus acidophilus (Rhodopseudomonas acidophila) protein is Cytochrome c2.